A 91-amino-acid polypeptide reads, in one-letter code: Putative defensin-like protein 83 (91 aa).

The N-terminal stretch at 1 to 27 is a signal peptide; the sequence is MATNKFLSILLLSLMAFAAILLPMISG. Intrachain disulfides connect Cys-32–Cys-71, Cys-37–Cys-57, Cys-43–Cys-69, and Cys-47–Cys-70.

Belongs to the DEFL family.

The protein localises to the secreted. This chain is Putative defensin-like protein 83 (LCR46), found in Arabidopsis thaliana (Mouse-ear cress).